The following is a 324-amino-acid chain: Acetyl-coenzyme A carboxylase carboxyl transferase subunit beta (324 aa).

One can recognise a CoA carboxyltransferase N-terminal domain in the interval 28-297 (LWCKCPSCNA…AVAPAAAKAP (270 aa)). The Zn(2+) site is built by Cys32, Cys35, Cys51, and Cys54. The segment at 32–54 (CPSCNAILYKSEVERNLEVCPKC) adopts a C4-type zinc-finger fold.

The protein belongs to the AccD/PCCB family. In terms of assembly, acetyl-CoA carboxylase is a heterohexamer composed of biotin carboxyl carrier protein (AccB), biotin carboxylase (AccC) and two subunits each of ACCase subunit alpha (AccA) and ACCase subunit beta (AccD). It depends on Zn(2+) as a cofactor.

The protein resides in the cytoplasm. It catalyses the reaction N(6)-carboxybiotinyl-L-lysyl-[protein] + acetyl-CoA = N(6)-biotinyl-L-lysyl-[protein] + malonyl-CoA. It participates in lipid metabolism; malonyl-CoA biosynthesis; malonyl-CoA from acetyl-CoA: step 1/1. In terms of biological role, component of the acetyl coenzyme A carboxylase (ACC) complex. Biotin carboxylase (BC) catalyzes the carboxylation of biotin on its carrier protein (BCCP) and then the CO(2) group is transferred by the transcarboxylase to acetyl-CoA to form malonyl-CoA. This is Acetyl-coenzyme A carboxylase carboxyl transferase subunit beta from Methylococcus capsulatus (strain ATCC 33009 / NCIMB 11132 / Bath).